We begin with the raw amino-acid sequence, 122 residues long: UPF0102 protein Atu0303 (122 aa).

Belongs to the UPF0102 family.

The chain is UPF0102 protein Atu0303 from Agrobacterium fabrum (strain C58 / ATCC 33970) (Agrobacterium tumefaciens (strain C58)).